The chain runs to 245 residues: Sugar fermentation stimulation protein homolog (245 aa).

The protein belongs to the SfsA family.

In Yersinia pestis bv. Antiqua (strain Nepal516), this protein is Sugar fermentation stimulation protein homolog.